We begin with the raw amino-acid sequence, 800 residues long: N,N'-diacetylchitobiose phosphorylase (800 aa).

6 residues coordinate N-acetyl-alpha-D-glucosamine 1-phosphate: arginine 333, arginine 343, arginine 349, aspartate 350, tryptophan 490, and aspartate 492. Aspartate 492 acts as the Proton donor in catalysis. Positions 492, 636, and 637 each coordinate N-acetyl-D-glucosamine. The N-acetyl-alpha-D-glucosamine 1-phosphate site is built by glutamate 637, histidine 644, glutamine 690, threonine 709, and glycine 710.

Belongs to the glycosyl hydrolase 94 family. Homodimer.

The catalysed reaction is N,N'-diacetylchitobiose + phosphate = N-acetyl-alpha-D-glucosamine 1-phosphate + N-acetyl-D-glucosamine. Its function is as follows. Catalyzes the reversible phosphorolysis of chitobiose (N,N'-diacetylchitobiose or (GlcNAc)(2)) into N-acetyl-alpha-D-glucosamine 1-phosphate (GlcNAc-1-P) and N-acetyl-D-glucosamine (GlcNAc) with inversion of the anomeric configuration. The protein is N,N'-diacetylchitobiose phosphorylase of Vibrio furnissii.